The following is a 732-amino-acid chain: Non-structural protein 4 (732 aa).

2 stretches are compositionally biased toward polar residues: residues K13–H23 and L31–S56. Disordered regions lie at residues K13 to A74 and L706 to E732. The span at Q719–E732 shows a compositional bias: acidic residues.

The sequence is that of Non-structural protein 4 from Catharanthus roseus (Madagascar periwinkle).